A 284-amino-acid polypeptide reads, in one-letter code: Bifunctional protein FolD (284 aa).

NADP(+) contacts are provided by residues 165-167 (GRS), S190, and I231.

Belongs to the tetrahydrofolate dehydrogenase/cyclohydrolase family. In terms of assembly, homodimer.

The enzyme catalyses (6R)-5,10-methylene-5,6,7,8-tetrahydrofolate + NADP(+) = (6R)-5,10-methenyltetrahydrofolate + NADPH. It catalyses the reaction (6R)-5,10-methenyltetrahydrofolate + H2O = (6R)-10-formyltetrahydrofolate + H(+). Its pathway is one-carbon metabolism; tetrahydrofolate interconversion. In terms of biological role, catalyzes the oxidation of 5,10-methylenetetrahydrofolate to 5,10-methenyltetrahydrofolate and then the hydrolysis of 5,10-methenyltetrahydrofolate to 10-formyltetrahydrofolate. The chain is Bifunctional protein FolD from Lysinibacillus sphaericus (strain C3-41).